The sequence spans 573 residues: 60 kDa heat shock protein, mitochondrial (573 aa).

The N-terminal 26 residues, 1–26 (MLRLPTVLRQMRPVSRALAPHLTRAY), are a transit peptide targeting the mitochondrion. At Lys31 the chain carries N6-succinyllysine. Residues Ser67 and Ser70 each carry the phosphoserine modification. Lys75 contributes to the ATP binding site. N6-acetyllysine is present on Lys75. The residue at position 82 (Lys82) is an N6-acetyllysine; alternate. Lys82 is subject to N6-succinyllysine; alternate. The residue at position 87 (Lys87) is an N6-acetyllysine. Tyr90 is modified (phosphotyrosine). An N6-acetyllysine modification is found at Lys91. ATP is bound at residue 111–115 (DGTTT). Lys125 carries the post-translational modification N6-acetyllysine; alternate. Lys125 carries the post-translational modification N6-succinyllysine; alternate. Lys130 is subject to N6-acetyllysine. At Lys133 the chain carries N6-acetyllysine; alternate. An N6-succinyllysine; alternate modification is found at Lys133. Residue Lys133 is modified to N6-malonyllysine; alternate. Lys156 is subject to N6-acetyllysine. 5 positions are modified to N6-acetyllysine; alternate: Lys191, Lys202, Lys205, Lys218, and Lys236. N6-succinyllysine; alternate occurs at positions 191, 202, 205, 218, and 236. Lys249 is subject to N6-acetyllysine. The residue at position 250 (Lys250) is an N6-acetyllysine; alternate. N6-succinyllysine; alternate is present on Lys250. Lys269 and Lys292 each carry N6-acetyllysine. N6-succinyllysine is present on Lys301. Lys314 bears the N6-acetyllysine mark. Position 352 is an N6-acetyllysine; alternate (Lys352). At Lys352 the chain carries N6-succinyllysine; alternate. Lys359 and Lys389 each carry N6-acetyllysine. At Lys396 the chain carries N6-acetyllysine; alternate. Lys396 is subject to N6-succinyllysine; alternate. Ser410 carries the phosphoserine modification. Gly440 provides a ligand contact to ATP. Lys455 carries the N6-acetyllysine; alternate modification. Lys455 carries the N6-succinyllysine; alternate modification. An N6-acetyllysine modification is found at Lys469. The residue at position 481 (Lys481) is an N6-acetyllysine; alternate. Residue Lys481 is modified to N6-succinyllysine; alternate. A Phosphoserine modification is found at Ser488. Asp520 lines the ATP pocket. A Glycyl lysine isopeptide (Lys-Gly) (interchain with G-Cter in SUMO2) cross-link involves residue Lys551.

It belongs to the chaperonin (HSP60) family. As to quaternary structure, homoheptamer arranged in a ring structure. The functional units of these chaperonins consist of heptameric rings of the large subunit Hsp60, which function as a back-to-back double ring. Interacts with 2 heptameric Hsp10 rings to form the symmetrical football complex. Interacts with HRAS. Interacts with ATAD3A. Interacts with ETFBKMT and EEF1AKMT3. Interacts with MFHAS1.

Its subcellular location is the mitochondrion matrix. The enzyme catalyses ATP + H2O + a folded polypeptide = ADP + phosphate + an unfolded polypeptide.. In terms of biological role, chaperonin implicated in mitochondrial protein import and macromolecular assembly. Together with Hsp10, facilitates the correct folding of imported proteins. May also prevent misfolding and promote the refolding and proper assembly of unfolded polypeptides generated under stress conditions in the mitochondrial matrix. The functional units of these chaperonins consist of heptameric rings of the large subunit Hsp60, which function as a back-to-back double ring. In a cyclic reaction, Hsp60 ring complexes bind one unfolded substrate protein per ring, followed by the binding of ATP and association with 2 heptameric rings of the co-chaperonin Hsp10. This leads to sequestration of the substrate protein in the inner cavity of Hsp60 where, for a certain period of time, it can fold undisturbed by other cell components. Synchronous hydrolysis of ATP in all Hsp60 subunits results in the dissociation of the chaperonin rings and the release of ADP and the folded substrate protein. The protein is 60 kDa heat shock protein, mitochondrial (HSPD1) of Cricetulus griseus (Chinese hamster).